The following is a 302-amino-acid chain: Nitrophorin Cim l NP (302 aa).

Residues 1 to 20 (MKLLLSAGAALAFVLGLCAA) form the signal peptide. Cys80 contacts heme.

The cofactor is heme b. Post-translationally, the N-terminus is blocked. As to expression, expressed in salivary glands.

Its subcellular location is the secreted. Functionally, heme-based protein that delivers nitric oxide gas (NO) to the victim while feeding, resulting in vasodilation. In place of heme, the heme-binding cysteine can also reversibly bind NO when it is present in high concentrations. The protein is Nitrophorin Cim l NP of Cimex lectularius (Bed bug).